The sequence spans 253 residues: Transposase for insertion sequence element IS904 (253 aa).

An Integrase catalytic domain is found at 90 to 253 (KATAPNKVWL…SPKDFEKYNS (164 aa)).

The protein belongs to the transposase IS3/IS150/IS904 family.

Functionally, involved in the transposition of the insertion sequence. The chain is Transposase for insertion sequence element IS904 (nisX1) from Lactococcus lactis subsp. lactis (strain IL1403) (Streptococcus lactis).